Here is a 259-residue protein sequence, read N- to C-terminus: Ribonuclease HII (259 aa).

Residues 72-259 (SYIAGIDEVG…PIKDMIKNKL (188 aa)) enclose the RNase H type-2 domain. 3 residues coordinate a divalent metal cation: aspartate 78, glutamate 79, and aspartate 170.

This sequence belongs to the RNase HII family. The cofactor is Mn(2+). It depends on Mg(2+) as a cofactor.

It localises to the cytoplasm. It carries out the reaction Endonucleolytic cleavage to 5'-phosphomonoester.. Endonuclease that specifically degrades the RNA of RNA-DNA hybrids. This chain is Ribonuclease HII, found in Bacillus cytotoxicus (strain DSM 22905 / CIP 110041 / 391-98 / NVH 391-98).